The chain runs to 463 residues: Putative WAS protein family homolog 3 (463 aa).

The tract at residues 1–54 (MTPVRMQHSLAGQTYAVPLIQPDLRREEAVQQMADALQYLQKVSGDIFSRISQQ) is required for WASH complex assembly. The tract at residues 1–165 (MTPVRMQHSL…EGLGGLPSNI (165 aa)) is WHD1. Lysine 218 participates in a covalent cross-link: Glycyl lysine isopeptide (Lys-Gly) (interchain with G-Cter in ubiquitin). Residues 295 to 463 (QDGVLTPPPP…AEEDEDDWES (169 aa)) are disordered. Pro residues predominate over residues 300-312 (TPPPPPPPPPPAP). Positions 347–463 (QGAPREVVDP…AEEDEDDWES (117 aa)) are VCA. In terms of domain architecture, WH2 spans 359–381 (GRATLLESIRQAGGIGKAKLRSM). A compositionally biased stretch (basic and acidic residues) spans 380–396 (SMKERKLEKKQQKEQEQ). A compositionally biased stretch (gly residues) spans 422–434 (SGKGPGAGEGPGG). Residues 454 to 463 (AEEDEDDWES) show a composition bias toward acidic residues.

Belongs to the WASH1 family. Component of the WASH core complex also described as WASH regulatory complex (SHRC) composed of WASH (WASHC1, WASH2P or WASH3P), WASHC2 (WASHC2A or WASHC2C), WASHC3, WASHC4 and WASHC5. The WASH core complex associates with the F-actin-capping protein dimer (formed by CAPZA1, CAPZA2 or CAPZA3 and CAPZB) in a transient or substoichiometric manner which was initially described as WASH complex. Interacts (via WHD1 region) with WASHC2C; the interaction is direct. Interacts with alpha-tubulin. Interacts with BECN1; WASHC1 and AMBRA1 can competitively interact with BECN1. Interacts with BLOC1S2; may associate with the BLOC-1 complex. Interacts with tubulin gamma chain (TUBG1 or TUBG2). Interacts with EXOC1, EXOC4, EXOC8; in MMP14-positive endosomes in breast tumor cells; indicative for an association with the exocyst complex.

It is found in the early endosome. Its subcellular location is the early endosome membrane. It localises to the recycling endosome membrane. The protein localises to the cell projection. The protein resides in the lamellipodium. It is found in the filopodium. Its subcellular location is the cytoplasmic vesicle. It localises to the autophagosome. The protein localises to the cytoplasm. The protein resides in the cytoskeleton. It is found in the microtubule organizing center. Its subcellular location is the centrosome. It localises to the centriole. In terms of biological role, acts as a nucleation-promoting factor at the surface of endosomes, where it recruits and activates the Arp2/3 complex to induce actin polymerization, playing a key role in the fission of tubules that serve as transport intermediates during endosome sorting. Involved in endocytic trafficking of EGF. Involved in transferrin receptor recycling. Regulates the trafficking of endosomal alpha5beta1 integrin to the plasma membrane and involved in invasive cell migration. In T-cells involved in endosome-to-membrane recycling of receptors including T-cell receptor (TCR), CD28 and ITGAL; proposed to be implicated in T cell proliferation and effector function. In dendritic cells involved in endosome-to-membrane recycling of major histocompatibility complex (MHC) class II probably involving retromer and subsequently allowing antigen sampling, loading and presentation during T-cell activation. Involved in Arp2/3 complex-dependent actin assembly driving Salmonella typhimurium invasion independent of ruffling. Involved in the exocytosis of MMP14 leading to matrix remodeling during invasive migration and implicating late endosome-to-plasma membrane tubular connections and cooperation with the exocyst complex. Involved in negative regulation of autophagy independently from its role in endosomal sorting by inhibiting BECN1 ubiquitination to inactivate PIK3C3/Vps34 activity. The sequence is that of Putative WAS protein family homolog 3 (WASH3P) from Homo sapiens (Human).